A 520-amino-acid polypeptide reads, in one-letter code: MTQFDHDRLLIIDFGSQVTQLIARRLRELNVFCEIHPFQNVTDAFLADFAPKAVIFSGGPASVIDANSPRPPASVFELGVPILGICYGQQVMMQMLGGMVERGHGTAEFGRAYVTPQGDRPELLNGWFLDGREQVWMSHGDHVSRIAPGFEVYGTSPNAPFAITADLARNFFAVQFHPEVHHTPNGKTLYENFVRLAGFTGDWTMDAYREQAIAEIRAQVGDGKVICALSGGVDSSVAAVLIHEAIGEQLTCVFVDHGLLRKNEAQEVVTMFREHYNLPLIHADETELFLSALDGQSDPETKRKIIGKLFIDVFEAKAKEIGGADFLAQGTLYPDVIESVSFSGGPSVTIKSHHNVGGLPEKMGMKLVEPLRELFKDEVRALGHELGLPASFIGRHPFPGPGLAIRCPGEITRPKLEILREADAVYIDQIRKYGLYDEIWQAYVAILPVRTVGVMGDGRTYDYACALRAVTSVDGMTADYYPFTHEFLGETATRIINEVQGINRVTYDITSKPPGTIEWE.

The Glutamine amidotransferase type-1 domain maps to 8-202 (RLLIIDFGSQ…FVRLAGFTGD (195 aa)). Residue cysteine 86 is the Nucleophile of the active site. Residues histidine 177 and glutamate 179 contribute to the active site. The GMPS ATP-PPase domain occupies 203 to 395 (WTMDAYREQA…LGLPASFIGR (193 aa)). Position 230–236 (230–236 (SGGVDSS)) interacts with ATP.

Homodimer.

The enzyme catalyses XMP + L-glutamine + ATP + H2O = GMP + L-glutamate + AMP + diphosphate + 2 H(+). It functions in the pathway purine metabolism; GMP biosynthesis; GMP from XMP (L-Gln route): step 1/1. Catalyzes the synthesis of GMP from XMP. The chain is GMP synthase [glutamine-hydrolyzing] from Dinoroseobacter shibae (strain DSM 16493 / NCIMB 14021 / DFL 12).